A 223-amino-acid polypeptide reads, in one-letter code: Crossover junction endodeoxyribonuclease RuvC (223 aa).

Catalysis depends on residues Asp-12, Glu-73, and Asp-146. Residues Asp-12, Glu-73, and Asp-146 each contribute to the Mg(2+) site. The interval 182–223 (QGKLGKAKSTLNARNNAQVTGDAQVRAGHPSQFERPDRADPR) is disordered. The span at 190-202 (STLNARNNAQVTG) shows a compositional bias: polar residues. A compositionally biased stretch (basic and acidic residues) spans 213–223 (QFERPDRADPR).

It belongs to the RuvC family. In terms of assembly, homodimer which binds Holliday junction (HJ) DNA. The HJ becomes 2-fold symmetrical on binding to RuvC with unstacked arms; it has a different conformation from HJ DNA in complex with RuvA. In the full resolvosome a probable DNA-RuvA(4)-RuvB(12)-RuvC(2) complex forms which resolves the HJ. Requires Mg(2+) as cofactor.

The protein resides in the cytoplasm. It catalyses the reaction Endonucleolytic cleavage at a junction such as a reciprocal single-stranded crossover between two homologous DNA duplexes (Holliday junction).. In terms of biological role, the RuvA-RuvB-RuvC complex processes Holliday junction (HJ) DNA during genetic recombination and DNA repair. Endonuclease that resolves HJ intermediates. Cleaves cruciform DNA by making single-stranded nicks across the HJ at symmetrical positions within the homologous arms, yielding a 5'-phosphate and a 3'-hydroxyl group; requires a central core of homology in the junction. The consensus cleavage sequence is 5'-(A/T)TT(C/G)-3'. Cleavage occurs on the 3'-side of the TT dinucleotide at the point of strand exchange. HJ branch migration catalyzed by RuvA-RuvB allows RuvC to scan DNA until it finds its consensus sequence, where it cleaves and resolves the cruciform DNA. This is Crossover junction endodeoxyribonuclease RuvC from Corynebacterium efficiens (strain DSM 44549 / YS-314 / AJ 12310 / JCM 11189 / NBRC 100395).